The primary structure comprises 116 residues: Large ribosomal subunit protein bL17 (116 aa).

The protein belongs to the bacterial ribosomal protein bL17 family. In terms of assembly, part of the 50S ribosomal subunit. Contacts protein L32.

This is Large ribosomal subunit protein bL17 from Microcystis aeruginosa (strain NIES-843 / IAM M-2473).